Consider the following 313-residue polypeptide: NAD-capped RNA hydrolase NudC (313 aa).

Substrate is bound at residue arginine 111. In terms of domain architecture, Nudix hydrolase spans 168 to 293; that stretch reads PRIDPAVICL…DWSSASESKL (126 aa). Residues alanine 202, glutamate 218, and glutamate 222 each coordinate a divalent metal cation. Positions 203–224 match the Nudix box motif; it reads GFVEAGESFEVCVAREIREEIG. A substrate-binding site is contributed by 236 to 243; that stretch reads QPWPFPRS. Glutamate 264 is an a divalent metal cation binding site.

Belongs to the Nudix hydrolase family. NudC subfamily. As to quaternary structure, homodimer. Requires Mg(2+) as cofactor. It depends on Mn(2+) as a cofactor.

The catalysed reaction is a 5'-end NAD(+)-phospho-ribonucleoside in mRNA + H2O = a 5'-end phospho-adenosine-phospho-ribonucleoside in mRNA + beta-nicotinamide D-ribonucleotide + 2 H(+). The enzyme catalyses NAD(+) + H2O = beta-nicotinamide D-ribonucleotide + AMP + 2 H(+). It carries out the reaction NADH + H2O = reduced beta-nicotinamide D-ribonucleotide + AMP + 2 H(+). In terms of biological role, mRNA decapping enzyme that specifically removes the nicotinamide adenine dinucleotide (NAD) cap from a subset of mRNAs by hydrolyzing the diphosphate linkage to produce nicotinamide mononucleotide (NMN) and 5' monophosphate mRNA. The NAD-cap is present at the 5'-end of some mRNAs and stabilizes RNA against 5'-processing. Has preference for mRNAs with a 5'-end purine. Catalyzes the hydrolysis of a broad range of dinucleotide pyrophosphates. The chain is NAD-capped RNA hydrolase NudC from Mycobacterium bovis (strain ATCC BAA-935 / AF2122/97).